The primary structure comprises 96 residues: Acylphosphatase (96 aa).

The 86-residue stretch at 11–96 folds into the Acylphosphatase-like domain; that stretch reads ARRWYVRGRV…ITSYDSFRIR (86 aa). Residues R26 and N44 contribute to the active site.

This sequence belongs to the acylphosphatase family.

The catalysed reaction is an acyl phosphate + H2O = a carboxylate + phosphate + H(+). This chain is Acylphosphatase (acyP), found in Solibacter usitatus (strain Ellin6076).